The following is a 450-amino-acid chain: Sulfide:quinone oxidoreductase, mitochondrial (450 aa).

FAD-binding positions include 53–54 (AG), glutamate 75, glutamine 83, and valine 118. 2 positions are modified to N6-acetyllysine: lysine 134 and lysine 173. Cysteine 201 (cysteine persulfide intermediate) is an active-site residue. Cysteines 201 and 379 form a disulfide. Aspartate 336 is an FAD binding site. Serine 343 is subject to Phosphoserine. Position 344-347 (344-347 (KTAA)) interacts with FAD. Cysteine 379 acts as the Cysteine persulfide intermediate in catalysis.

The protein belongs to the SQRD family. It depends on FAD as a cofactor.

It is found in the mitochondrion. The catalysed reaction is ubiquinone-10 + hydrogen sulfide + sulfite + 2 H(+) = ubiquinol-10 + thiosulfate. It carries out the reaction a quinone + hydrogen sulfide + glutathione + H(+) = S-sulfanylglutathione + a quinol. The enzyme catalyses ubiquinone-10 + hydrogen sulfide + glutathione + H(+) = S-sulfanylglutathione + ubiquinol-10. In terms of biological role, catalyzes the oxidation of hydrogen sulfide with the help of a quinone, such as ubiquinone-10, giving rise to thiosulfate and ultimately to sulfane (molecular sulfur) atoms. Requires an additional electron acceptor; can use sulfite, sulfide or cyanide (in vitro). It is believed the in vivo electron acceptor is glutathione. The protein is Sulfide:quinone oxidoreductase, mitochondrial of Mus musculus (Mouse).